A 520-amino-acid polypeptide reads, in one-letter code: MARARRVKRDSATNIYRTCKQAGTCPPDVLNKVENTTIADKILQYGSAGVFFGGLGISTGKGTGGTTGYVPLGEGPIRVGGTPTVIRPSLVPDTIGPSDIIPVDTLNPVEPTSSSIVPLTESSGPDLLPGEVETIAEIHPGPVVPSTDTPVTTTSRGASAVLEVAPEPTPPSRVRVSGTQYHNPSFQVITESTPAQGESSLADHILVTSGSGGQTIGGTASDLIELQEFPTRYSFEIDEPTPPRQSSTPLQRIRTALRRRGGLTNRRLVQQVPVEDPLFLSQPSRLVRFQFDNPVFEDEVTQIFEQDLNDFQEPPDRDFLDIRSLGRPQYSETPAGYVRVSRLGQRRTIRTRSGAQIGSQVHFYRDLSSINTEDPIELQLLGQHSGDATIVQGLTESTFVDVNVDENPLAEDFSISAHSDDLLLDEANEDFSGSQLVVGGRRSTSTYTVPRVETTRSASYYTQDIQGYYVSYPEDRDTSKDIIYPMPDLPVVIIHTYDTSGDFYLHPSLTTRRRRKRKYL.

Positions 1–10 (MARARRVKRD) match the Nuclear localization signal motif. Cysteines 19 and 25 form a disulfide. Residues 511 to 519 (TRRRRKRKY) carry the Nuclear localization signal motif.

This sequence belongs to the papillomaviridae L2 protein family. In terms of assembly, interacts with major capsid protein L1. Interacts with E2; this interaction inhibits E2 transcriptional activity but not the DNA replication function E2. Interacts with host GADD45GIP1. Interacts with host HSPA8; this interaction is required for L2 nuclear translocation. Interacts with host importins KPNB2 and KPNB3. Forms a complex with importin alpha2-beta1 heterodimers via interaction with the importin alpha2 adapter. Interacts with host DYNLT1; this interaction is essential for virus intracellular transport during entry. Interacts (via C-terminus) with host retromer subunits VPS35 and VPS29. In terms of processing, highly phosphorylated.

It is found in the virion. The protein localises to the host nucleus. Its subcellular location is the host early endosome. It localises to the host Golgi apparatus. Functionally, minor protein of the capsid that localizes along the inner surface of the virion, within the central cavities beneath the L1 pentamers. Plays a role in capsid stabilization through interaction with the major capsid protein L1. Once the virion enters the host cell, L2 escorts the genomic DNA into the nucleus by promoting escape from the endosomal compartments and traffic through the host Golgi network. Mechanistically, the C-terminus of L2 possesses a cell-penetrating peptide that protudes from the host endosome, interacts with host cytoplasmic retromer cargo and thereby mediates the capsid delivery to the host trans-Golgi network. Plays a role through its interaction with host dynein in the intracellular microtubule-dependent transport of viral capsid toward the nucleus. Mediates the viral genome import into the nucleus through binding to host importins. Once within the nucleus, L2 localizes viral genomes to host PML bodies in order to activate early gene expression for establishment of infection. Later on, promotes late gene expression by interacting with the viral E2 protein and by inhibiting its transcriptional activation functions. During virion assembly, encapsidates the genome by direct interaction with the viral DNA. This Human papillomavirus 25 protein is Minor capsid protein L2.